A 239-amino-acid polypeptide reads, in one-letter code: Ribonuclease PH (239 aa).

Phosphate is bound by residues R86 and 124–126 (GTR).

Belongs to the RNase PH family. Homohexameric ring arranged as a trimer of dimers.

The catalysed reaction is tRNA(n+1) + phosphate = tRNA(n) + a ribonucleoside 5'-diphosphate. In terms of biological role, phosphorolytic 3'-5' exoribonuclease that plays an important role in tRNA 3'-end maturation. Removes nucleotide residues following the 3'-CCA terminus of tRNAs; can also add nucleotides to the ends of RNA molecules by using nucleoside diphosphates as substrates, but this may not be physiologically important. Probably plays a role in initiation of 16S rRNA degradation (leading to ribosome degradation) during starvation. This chain is Ribonuclease PH, found in Psychromonas ingrahamii (strain DSM 17664 / CCUG 51855 / 37).